The primary structure comprises 567 residues: Lipase maturation factor 1 (567 aa).

The interval 1–39 (MRPDSPTMAAPAESLRRRKTGYSDPEPESPPAPGRGPAG) is disordered. The Cytoplasmic portion of the chain corresponds to 1–49 (MRPDSPTMAAPAESLRRRKTGYSDPEPESPPAPGRGPAGSPAHLHTGTF). Residues 50-72 (WLTRIVLLKALAFVYFVAFLVAF) form a helical membrane-spanning segment. Over 73–127 (HQNKQLIGDRGLLPCRVFLKNFQQYFQDRTSWEVFSYMPTILWLMDWSDMNSNLD) the chain is Lumenal. The chain crosses the membrane as a helical span at residues 128–151 (LLALLGLGISSFVLITGCANMLLM). Topologically, residues 152-207 (AALWGLYMSLVNVGHVWYSFGWESQLLETGFLGIFLCPLWTLSRLPQHTPTSRIVL) are cytoplasmic. Residues 208–221 (WGFRWLIFRIMLGA) form a helical membrane-spanning segment. Residues 222–292 (GLIKIRGDRC…LGRRACIIHG (71 aa)) are Lumenal-facing. Residues 293–321 (VLQILFQAVLIVSGNLSFLNWLTMVPSLA) form a helical membrane-spanning segment. Topologically, residues 322–367 (CFDDATLGFLFPSGPGSLKDRVLQMQRDIRGARPEPRFGSVVRRAA) are cytoplasmic. A helical membrane pass occupies residues 368–388 (NVSLGVLLAWLSVPVVLNLLS). At 389–567 (SRQVMNTHFN…DRGWPLPGPL (179 aa)) the chain is on the lumenal side.

Belongs to the lipase maturation factor family. Interacts with LPL and SEL1L.

The protein localises to the endoplasmic reticulum membrane. In terms of biological role, involved in the maturation of specific proteins in the endoplasmic reticulum. Required for maturation and transport of active lipoprotein lipase (LPL) through the secretory pathway. Each LMF1 molecule chaperones 50 or more molecules of LPL. The sequence is that of Lipase maturation factor 1 (LMF1) from Homo sapiens (Human).